The sequence spans 174 residues: Crossover junction endodeoxyribonuclease RuvC (174 aa).

Residues Asp8, Glu67, and Asp139 contribute to the active site. 3 residues coordinate Mg(2+): Asp8, Glu67, and Asp139.

This sequence belongs to the RuvC family. Homodimer which binds Holliday junction (HJ) DNA. The HJ becomes 2-fold symmetrical on binding to RuvC with unstacked arms; it has a different conformation from HJ DNA in complex with RuvA. In the full resolvosome a probable DNA-RuvA(4)-RuvB(12)-RuvC(2) complex forms which resolves the HJ. Requires Mg(2+) as cofactor.

It localises to the cytoplasm. It catalyses the reaction Endonucleolytic cleavage at a junction such as a reciprocal single-stranded crossover between two homologous DNA duplexes (Holliday junction).. Its function is as follows. The RuvA-RuvB-RuvC complex processes Holliday junction (HJ) DNA during genetic recombination and DNA repair. Endonuclease that resolves HJ intermediates. Cleaves cruciform DNA by making single-stranded nicks across the HJ at symmetrical positions within the homologous arms, yielding a 5'-phosphate and a 3'-hydroxyl group; requires a central core of homology in the junction. The consensus cleavage sequence is 5'-(A/T)TT(C/G)-3'. Cleavage occurs on the 3'-side of the TT dinucleotide at the point of strand exchange. HJ branch migration catalyzed by RuvA-RuvB allows RuvC to scan DNA until it finds its consensus sequence, where it cleaves and resolves the cruciform DNA. The polypeptide is Crossover junction endodeoxyribonuclease RuvC (Pseudomonas savastanoi pv. phaseolicola (strain 1448A / Race 6) (Pseudomonas syringae pv. phaseolicola (strain 1448A / Race 6))).